The primary structure comprises 356 residues: MMLFFSSFSDWFPGVNVFRYITFRTIAAMLTSGLIVFLFGPSIIASLKLRQGKGQPIRADGPQTHFKKAGTPTMGGLMILTGIVVSAFLWCNLSNIYFWVSLLVMLSFGAIGFYDDYLKVTKQTDKGFSGKARLSLEFFVAAIAAFIILQIGSSGFALPFLKDYLIHLGWFFIPFSAFVIVATGNAVNLTDGLDGLAIVPVMVAALSFALIAYLCGNMNFADYLQIHYVSGTGELAVLLGAVVGAGLGFLWFNAPPAAIFMGDTGSLALGGLLGTVAVATKHEIVLVLIGGLFVVEAFSVVIQVGYFKLTRKRVFLMAPIHHHFEKKGWTESQVVIRFWIISIVLALIGLSTLKLR.

The next 10 helical transmembrane spans lie at 25 to 45 (TIAA…SIIA), 70 to 90 (GTPT…AFLW), 93 to 113 (LSNI…AIGF), 138 to 158 (FFVA…GFAL), 164 to 184 (YLIH…VATG), 195 to 215 (GLAI…AYLC), 235 to 255 (LAVL…FNAP), 258 to 278 (AIFM…TVAV), 284 to 304 (IVLV…VIQV), and 333 to 353 (QVVI…LSTL).

It belongs to the glycosyltransferase 4 family. MraY subfamily. Mg(2+) is required as a cofactor.

Its subcellular location is the cell inner membrane. It carries out the reaction UDP-N-acetyl-alpha-D-muramoyl-L-alanyl-gamma-D-glutamyl-meso-2,6-diaminopimeloyl-D-alanyl-D-alanine + di-trans,octa-cis-undecaprenyl phosphate = di-trans,octa-cis-undecaprenyl diphospho-N-acetyl-alpha-D-muramoyl-L-alanyl-D-glutamyl-meso-2,6-diaminopimeloyl-D-alanyl-D-alanine + UMP. Its pathway is cell wall biogenesis; peptidoglycan biosynthesis. Catalyzes the initial step of the lipid cycle reactions in the biosynthesis of the cell wall peptidoglycan: transfers peptidoglycan precursor phospho-MurNAc-pentapeptide from UDP-MurNAc-pentapeptide onto the lipid carrier undecaprenyl phosphate, yielding undecaprenyl-pyrophosphoryl-MurNAc-pentapeptide, known as lipid I. This is Phospho-N-acetylmuramoyl-pentapeptide-transferase from Bartonella tribocorum (strain CIP 105476 / IBS 506).